The chain runs to 626 residues: Forkhead box protein O1 (626 aa).

Pro residues predominate over residues 1–11; it reads MAEAPLPPPPG. 4 disordered regions span residues 1-57, 90-142, 218-319, and 484-519; these read MAEA…PAAG, DIRQ…SRRN, SSWW…MPEQ, and PTYG…MTHN. Composition is skewed to low complexity over residues 37–48 and 101–133; these read NPSSSANSSPAP and QHPQ…AQQP. The fork-head DNA-binding region spans 144–238; the sequence is WGNLSYADLI…KNGKSPRRRA (95 aa). The span at 248–259 shows a compositional bias: basic residues; it reads AKSRGRAAKKKA. The span at 262 to 277 shows a compositional bias: low complexity; the sequence is QSSQDGSSDSPGSQFS. 2 stretches are compositionally biased toward polar residues: residues 298–310 and 484–494; these read RPRT…TISG and PTYGSQPTHNK.

In terms of processing, phosphorylated by AKT1; insulin-induced. Post-translationally, IGF1 rapidly induces phosphorylation of Thr-28, Ser-240 and Ser-303. Phosphorylation of Ser-240 decreases DNA-binding activity and promotes the phosphorylation of Thr-28, and Ser-303, which leads to nuclear exclusion and loss of function. Phosphorylation of Ser-313 is independent of IGF1 and leads to reduced function.

It is found in the cytoplasm. Its subcellular location is the nucleus. In terms of biological role, transcription factor that regulates metabolic homeostasis in response to oxidative stress. Binds to the consensus sequence 5'-TT[G/A]TTTTG-3' and the related Daf-16 family binding element (DBE) with consensus sequence 5'-TT[G/A]TTTAC-3'. Main regulator of redox balance and osteoblast numbers and controls bone mass. Orchestrates the endocrine function of the skeleton in regulating glucose metabolism. Also acts as a key regulator of chondrogenic commitment of skeletal progenitor cells in response to lipid availability: when lipids levels are low, translocates to the nucleus and promotes expression of sox9, which induces chondrogenic commitment and suppresses fatty acid oxidation. Acts synergistically with atf4 to suppress osteocalcin/bglap activity, increasing glucose levels and triggering glucose intolerance and insulin insensitivity. Also suppresses the transcriptional activity of runx2, an upstream activator of osteocalcin/bglap. May act as a positive regulator of apoptosis in cardiac smooth muscle cells as a result of its transcriptional activation of pro-apoptotic genes. The chain is Forkhead box protein O1 from Xenopus tropicalis (Western clawed frog).